Reading from the N-terminus, the 387-residue chain is N-acetyldiaminopimelate deacetylase (387 aa).

Aspartate 75 is an active-site residue. Glutamate 134 (proton acceptor) is an active-site residue.

It belongs to the peptidase M20A family. N-acetyldiaminopimelate deacetylase subfamily.

The enzyme catalyses N-acetyl-(2S,6S)-2,6-diaminopimelate + H2O = (2S,6S)-2,6-diaminopimelate + acetate. It participates in amino-acid biosynthesis; L-lysine biosynthesis via DAP pathway; LL-2,6-diaminopimelate from (S)-tetrahydrodipicolinate (acetylase route): step 3/3. In terms of biological role, catalyzes the conversion of N-acetyl-diaminopimelate to diaminopimelate and acetate. The chain is N-acetyldiaminopimelate deacetylase from Leuconostoc citreum (strain KM20).